Consider the following 834-residue polypeptide: Protein EFR3 homolog cmp44E (834 aa).

The stretch at 120–156 (NLFVESFLRMVQKLLEDSNPNLKIMATNSFVKFANIN) is one HEAT repeat. The chain crosses the membrane as a helical span at residues 595–612 (LHAISIGLLVLISRVSGI).

The protein belongs to the EFR3 family. Expression during embryogenesis is ubiquitous with notably higher levels in the CNS and brain.

The protein localises to the membrane. Functionally, an essential gene required for embryogenesis; required for cell viability. This chain is Protein EFR3 homolog cmp44E (stmA), found in Drosophila melanogaster (Fruit fly).